The chain runs to 400 residues: Phosphoglycerate kinase (400 aa).

Residues 21 to 23 (DFN), R37, 60 to 63 (HFGR), R119, and R152 each bind substrate. Residues K205, G296, E327, and 353–356 (GGDT) each bind ATP.

This sequence belongs to the phosphoglycerate kinase family. As to quaternary structure, monomer.

Its subcellular location is the cytoplasm. It catalyses the reaction (2R)-3-phosphoglycerate + ATP = (2R)-3-phospho-glyceroyl phosphate + ADP. It participates in carbohydrate degradation; glycolysis; pyruvate from D-glyceraldehyde 3-phosphate: step 2/5. The chain is Phosphoglycerate kinase from Aliarcobacter butzleri (strain RM4018) (Arcobacter butzleri).